A 243-amino-acid chain; its full sequence is Carboxy-S-adenosyl-L-methionine synthase (243 aa).

S-adenosyl-L-methionine-binding positions include Tyr-35, 68 to 70 (GCS), 92 to 93 (DN), and Arg-199.

The protein belongs to the class I-like SAM-binding methyltransferase superfamily. Cx-SAM synthase family. In terms of assembly, homodimer.

It carries out the reaction prephenate + S-adenosyl-L-methionine = carboxy-S-adenosyl-L-methionine + 3-phenylpyruvate + H2O. In terms of biological role, catalyzes the conversion of S-adenosyl-L-methionine (SAM) to carboxy-S-adenosyl-L-methionine (Cx-SAM). The chain is Carboxy-S-adenosyl-L-methionine synthase from Helicobacter pylori (strain J99 / ATCC 700824) (Campylobacter pylori J99).